The primary structure comprises 125 residues: UPF0738 protein GK0828 (125 aa).

The protein belongs to the UPF0738 family.

This is UPF0738 protein GK0828 from Geobacillus kaustophilus (strain HTA426).